Here is a 541-residue protein sequence, read N- to C-terminus: Malate synthase (541 aa).

The Proton acceptor role is filled by Arg-172. The Proton donor role is filled by Asp-452.

It belongs to the malate synthase family.

Its subcellular location is the cytoplasm. The catalysed reaction is glyoxylate + acetyl-CoA + H2O = (S)-malate + CoA + H(+). It functions in the pathway carbohydrate metabolism; glyoxylate cycle; (S)-malate from isocitrate: step 2/2. This chain is Malate synthase (mls), found in Myxococcus xanthus (strain DK1622).